The following is an 812-amino-acid chain: Phospholipase D alpha 1 (812 aa).

A propeptide spanning residues 1–46 is cleaved from the precursor; the sequence is MAQMLLHGTLHATIFEAASLSNPHRASGSAPKFIRKFVEGIEDTVG. One can recognise a C2 domain in the interval 1–130; that stretch reads MAQMLLHGTL…LNGEEIDRWL (130 aa). Residue Asp190 coordinates Ca(2+). The PLD phosphodiesterase 1 domain maps to 330–368; that stretch reads TMFTHHQKIVVVDHELPNQGSQQRRIVSFVGGLDLCDGR. Residues His335, Lys337, and Asp342 contribute to the active site. His335 serves as a coordination point for a 1,2-diacyl-sn-glycero-3-phosphate. Positions 374 and 408 each coordinate Ca(2+). Residues Gln524 and His663 each coordinate a 1,2-diacyl-sn-glycero-3-phosphate. One can recognise a PLD phosphodiesterase 2 domain in the interval 658–685; the sequence is FMIYVHTKMMIVDDEYIIIGSANINQRS. Catalysis depends on residues His663, Lys665, and Asp670. A Ca(2+)-binding site is contributed by Glu724.

It belongs to the phospholipase D family. C2-PLD subfamily. In terms of assembly, monomer. It depends on Ca(2+) as a cofactor. As to expression, expressed in leaves, roots, developing seeds and cultured cells.

The catalysed reaction is a 1,2-diacyl-sn-glycero-3-phosphocholine + H2O = a 1,2-diacyl-sn-glycero-3-phosphate + choline + H(+). Its function is as follows. Hydrolyzes glycerol-phospholipids at the terminal phosphodiesteric bond. Plays an important role in various cellular processes. This chain is Phospholipase D alpha 1 (PLD1), found in Oryza sativa subsp. japonica (Rice).